The following is a 73-amino-acid chain: Translation initiation factor IF-1 (73 aa).

The 73-residue stretch at 1 to 73 folds into the S1-like domain; that stretch reads MPKKEGVIEI…TRGRIVYRYK (73 aa).

It belongs to the IF-1 family. In terms of assembly, component of the 30S ribosomal translation pre-initiation complex which assembles on the 30S ribosome in the order IF-2 and IF-3, IF-1 and N-formylmethionyl-tRNA(fMet); mRNA recruitment can occur at any time during PIC assembly.

The protein localises to the cytoplasm. Its function is as follows. One of the essential components for the initiation of protein synthesis. Stabilizes the binding of IF-2 and IF-3 on the 30S subunit to which N-formylmethionyl-tRNA(fMet) subsequently binds. Helps modulate mRNA selection, yielding the 30S pre-initiation complex (PIC). Upon addition of the 50S ribosomal subunit IF-1, IF-2 and IF-3 are released leaving the mature 70S translation initiation complex. This chain is Translation initiation factor IF-1, found in Nocardioides sp. (strain ATCC BAA-499 / JS614).